Here is a 186-residue protein sequence, read N- to C-terminus: MMELQGKFLIAMPHLDDYFNRTVVFMCEHNEQGSMGLVINQPTDLSIAELYSKLNFMMKNDRTFGNEMVVAGGPVHTERGFILHKNTLNAFQHTYKVTKELSMTTSADVVETLGSTFAPEKYLVALGCSSWGAGQLEKEIRDNAWLVVSSNDQILFDMPYEDRYAAANQLLGIHPYNFALAQVGHS.

This sequence belongs to the UPF0301 (AlgH) family.

The protein is UPF0301 protein NTHI0415 of Haemophilus influenzae (strain 86-028NP).